The sequence spans 485 residues: Auxin transporter protein 1 (485 aa).

At 1–59 the chain is on the cytoplasmic side; sequence MSEGVEAIVANDNGTDQVNGNRTGKDNEEHDGSTGSNLSNFLWHGGSVWDAWFSCASNQ. Over residues 12 to 22 the composition is skewed to polar residues; that stretch reads DNGTDQVNGNR. Positions 12–33 are disordered; the sequence is DNGTDQVNGNRTGKDNEEHDGS. The span at 23 to 32 shows a compositional bias: basic and acidic residues; sequence TGKDNEEHDG. The chain crosses the membrane as a helical span at residues 60–77; that stretch reads VAQVLLTLPYSFSQLGML. Residues 78–79 are Extracellular-facing; the sequence is SG. The chain crosses the membrane as a helical span at residues 80–100; the sequence is IVLQIFYGLLGSWTAYLISVL. Over 101 to 135 the chain is Cytoplasmic; the sequence is YVEYRARKEKEGKSFKNHVIQWFEVLDGLLGSYWK. The chain crosses the membrane as a helical span at residues 136–156; it reads ALGLAFNCTFLLFGSVIQLIA. Residues 157-172 lie on the Extracellular side of the membrane; sequence CASNIYYINDHLDKRT. Residues 173–193 form a helical membrane-spanning segment; it reads WTYIFGACCATTVFIPSFHNY. Topologically, residues 194-196 are cytoplasmic; it reads RIW. Residues 197–217 form a helical membrane-spanning segment; sequence SFLGLGMTTYTAWYLAIASII. Residues 218 to 232 are Extracellular-facing; that stretch reads HGQAEGVKHSGPTKL. The helical transmembrane segment at 233 to 253 threads the bilayer; it reads VLYFTGATNILYTFGGHAVTV. Over 254–266 the chain is Cytoplasmic; the sequence is EIMHAMWKPQKFK. Residues 267–287 traverse the membrane as a helical segment; sequence YIYLMATLYVFTLTIPSAAAV. Residues 288–314 lie on the Extracellular side of the membrane; the sequence is YWAFGDALLDHSNAFSLMPKNAWRDAA. A helical transmembrane segment spans residues 315 to 335; that stretch reads VILMLIHQFITFGFACTPLYF. Residues 336–356 are Cytoplasmic-facing; the sequence is VWEKVIGMHDTKSICLRALAR. A helical membrane pass occupies residues 357–377; sequence LPVVIPIWFLAIIFPFFGPIN. Residue S378 is a topological domain, extracellular. Residues 379 to 399 form a helical membrane-spanning segment; the sequence is AVGALLVSFTVYIIPSLAHML. Residues 400-425 are Cytoplasmic-facing; it reads TYRSASARQNAAEKPPFFMPSWTAMY. A helical membrane pass occupies residues 426-446; it reads VLNAFVVVWVLIVGFGFGGWA. Topologically, residues 447 to 485 are extracellular; it reads SVTNFVRQVDTFGLFAKCYQCKPAAAAAHAPVSALHHRL.

Belongs to the amino acid/polyamine transporter 2 family. Amino acid/auxin permease (AAAP) (TC 2.A.18.1) subfamily. Expressed in root and shoot apical tissues. In root apex, confined to stele initials, protophloem poles, statolith-containing S2 columella cells, lateral root cap cells (LRC), and in epidermal cells from the distal elongation zone (DEZ) up to central elongation zone (CEZ).

The protein resides in the cell membrane. With respect to regulation, auxin uptake mediated by AUX1 is inhibited by chromosaponin-1 (CSI), 1-naphthoxyacetic acid (1-NOA) and 3-chloro-4-hydroxyphenylacetic acid (CHPAA). Functionally, carrier protein involved in proton-driven auxin influx. Mediates the formation of auxin gradient from developing leaves (site of auxin biosynthesis) to tips by contributing to the loading of auxin in vascular tissues and facilitating acropetal (base to tip) auxin transport within inner tissues of the root apex, and basipetal (tip to base) auxin transport within outer tissues of the root apex. Unloads auxin from the mature phloem to deliver the hormone to the root meristem via the protophloem cell files. Coordinated subcellular localization of AUX1 is regulated by a brefeldin A-sensitive (BFA) vesicle trafficking process. Involved in lateral root formation, trichoblast polarization and root hair elongation. Required for gravitropism and thigmotropism, especially in roots, by modulating responses to auxin, ethylene and cytokinins such as benzyladenine (BA). Needed for ammonium-mediated root-growth inhibition. Confers sensitivity to the herbicide 2,4-dichlorophenoxyacetic acid (2,4-D, auxin analog), and to polar auxin transport inhibitors such as N-1-naphthylphthalamic acid (NPA) and 2,3,5-triiodobenzoic acid (TIBA). This is Auxin transporter protein 1 (AUX1) from Arabidopsis thaliana (Mouse-ear cress).